Consider the following 148-residue polypeptide: Large ribosomal subunit protein uL15 (148 aa).

Residues 1–30 are compositionally biased toward basic residues; sequence MPSRLRKTRKLRGHVSHGHGRIGKHRKHPG. The segment at 1-37 is disordered; it reads MPSRLRKTRKLRGHVSHGHGRIGKHRKHPGGRGNAGG. H39 carries the (3S)-3-hydroxyhistidine modification. N6-acetyllysine is present on residues K47 and K55. S68 is subject to Phosphoserine. An N6-acetyllysine modification is found at K110.

Belongs to the universal ribosomal protein uL15 family. In terms of assembly, component of the large ribosomal subunit. Hydroxylated on His-39 by MINA.

It localises to the cytoplasm. Its function is as follows. Component of the large ribosomal subunit. The ribosome is a large ribonucleoprotein complex responsible for the synthesis of proteins in the cell. The sequence is that of Large ribosomal subunit protein uL15 (Rpl27a) from Rattus norvegicus (Rat).